The primary structure comprises 293 residues: ATP synthase subunit gamma, mitochondrial (293 aa).

Residues 1 to 21 (MFALRTAARPAARSVGATRNY) constitute a mitochondrion transit peptide.

As to quaternary structure, F-type ATP synthases have 2 components, the catalytic core F(1) and the membrane-embedded component F(0), linked together by a central stalk and a peripheral stalk. The central stalk, also called rotor shaft, is often seen as part of F(1). The peripheral stalk is seen as part of F(0). F(0) contains the membrane channel next to the rotor. F-type ATP synthases form dimers but each monomer functions independently in ATP generation. The dimer consists of 17 different polypeptides: ATP1 (subunit alpha, 3 molecules per monomer, part of F(1)), ATP2 (subunit beta, 3 copies per monomer, part of F(1)), ATP3 (subunit gamma, part of the central stalk), ATP4 (subunit b, part of the peripheral stalk), ATP5/OSCP (subunit 5/OSCP, part of the peripheral stalk), ATP6 (subunit a, part of the peripheral stalk), ATP7 (subunit d, part of the peripheral stalk), ATP8 (subunit 8, part of the peripheral stalk), OLI1 (subunit c, part of the rotor, 10 molecules per monomer), ATP14 (subunit h, part of the peripheral stalk), ATP15 (subunit epsilon, part of the central stalk), ATP16 (subunit delta, part of the central stalk), ATP17 (subunit f, part of the peripheral stalk), ATP18 (subunit i/j, part of the peripheral stalk), ATP19 (subunit k, dimer-specific, at interface between monomers), ATP20 (subunit g, at interface between monomers), TIM11 (subunit e, at interface between monomers).

The protein resides in the mitochondrion inner membrane. Functionally, mitochondrial membrane ATP synthase (F(1)F(0) ATP synthase or Complex V) produces ATP from ADP in the presence of a proton gradient across the membrane which is generated by electron transport complexes of the respiratory chain. F-type ATP synthases consist of two structural domains, F(1) - containing the extramembraneous catalytic core, and F(0) - containing the membrane proton channel, linked together by a central stalk and a peripheral stalk. During catalysis, ATP synthesis in the catalytic domain of F(1) is coupled via a rotary mechanism of the central stalk subunits to proton translocation. Part of the complex F(1) domain and the central stalk which is part of the complex rotary element. The gamma/ATP3 subunit protrudes into the catalytic domain formed of alpha/ATP1(3)beta/ATP2(3). Rotation of the central stalk against the surrounding alpha/ATP1(3)beta/ATP2(3) subunits leads to hydrolysis of ATP in three separate catalytic sites on the beta/ATP2 subunits. This Yarrowia lipolytica (strain CLIB 122 / E 150) (Yeast) protein is ATP synthase subunit gamma, mitochondrial.